The chain runs to 61 residues: uncharacterized protein (61 aa).

This is an uncharacterized protein from Archaeoglobus fulgidus (strain ATCC 49558 / DSM 4304 / JCM 9628 / NBRC 100126 / VC-16).